We begin with the raw amino-acid sequence, 950 residues long: MSDKKRINQIAKETGLSNTELVATAQSLGFEVKSHSSSVTAEQAEKIIQGVKTGTDTIVNLLKKLLKLKLRLVPETAKSKQEDHPRTFAGKAVVEDPAILARIKEKEEAKKAAKTEAEPIEEVITTEKPKVAEPVKKSEPKAAAKAEETKVEKVEAKANTVTPKAEVKTENVADKKEPVVTEEKKKSLTQKPRIQIKVIKRAEDIKKEQAAARPEKKKFDKNRNDRNNRNDNRRPNQNGNGQGHSQGGNHYDKNRPAGQGQNQGQKRDKFASSGSSSTSDTFTPAASGKNNRRDRDRKKTDSNRDNTKDGNRKGGPLRVNDNRNQVRNARNSNWNQKGGRGRYQNNQSSNVPATQRKFHELPESLEYEVGMNVQDIAKSIKREPAEIIKKLFMMGTMVNQNQSLDEDTIELILMDYGVTPLKKVEEDKSDIERLFVEDGYLNEDKMVERPAVVTIMGHVDHGKTTLLDRFRESRVTEGEAGGITQHIGAYQIKTNGKKITFLDTPGHEAFTSMRARGASVTDITILVVAADDGVMPQTIEAINHSKAAGVPIIVAINKLDKPGANPQRVTQELTEHGVFPVAWDPENGSEFVEISAKFNQNLEDLLDTVLLVAEVQELKADPSVRAIGTVVEARLDQGKGAIATLLVQQGTLHIQDPIVVGNTYGRVRTMTNDLGRRIKEAGPSTPIELTGLSDVPQAGDHFAVFEDEKAARAAGEERAKRAQLIKRQNTRRVNLDNLFDTLKEGQTKSVNIIIKADVQGSAEALAASLQKIEVEGVKVDIVHSAVGAISESDISLAAASNAIIIGFNVRPTGLAREQAAQEEVDIRLHSIIYKVIEEVETAMHGMLDPEFKEEIIGEAIVRETFNVSKVGTIAGFMVIRGKVTRDASVRVIREGVVIHDGAIASLKHFKDDVKEVGNAQEGGLMVEDFNDVEIDDTFEVYKMVEIERKK.

Basic and acidic residues-rich tracts occupy residues 128–156 (KPKVAEPVKKSEPKAAAKAEETKVEKVEA), 165–186 (AEVKTENVADKKEPVVTEEKKK), 200–234 (KRAEDIKKEQAAARPEKKKFDKNRNDRNNRNDNRR), and 291–312 (NRRDRDRKKTDSNRDNTKDGNR). Residues 128–352 (KPKVAEPVKK…YQNNQSSNVP (225 aa)) are disordered. Polar residues-rich tracts occupy residues 322 to 336 (NRNQVRNARNSNWNQ) and 343 to 352 (YQNNQSSNVP). Positions 448–619 (ERPAVVTIMG…LLVAEVQELK (172 aa)) constitute a tr-type G domain. The segment at 457 to 464 (GHVDHGKT) is G1. 457–464 (GHVDHGKT) contributes to the GTP binding site. Positions 482–486 (GITQH) are G2. The segment at 503 to 506 (DTPG) is G3. GTP-binding positions include 503–507 (DTPGH) and 557–560 (NKLD). The interval 557–560 (NKLD) is G4. The segment at 595 to 597 (SAK) is G5.

It belongs to the TRAFAC class translation factor GTPase superfamily. Classic translation factor GTPase family. IF-2 subfamily.

Its subcellular location is the cytoplasm. Its function is as follows. One of the essential components for the initiation of protein synthesis. Protects formylmethionyl-tRNA from spontaneous hydrolysis and promotes its binding to the 30S ribosomal subunits. Also involved in the hydrolysis of GTP during the formation of the 70S ribosomal complex. The polypeptide is Translation initiation factor IF-2 (infB) (Lactococcus lactis subsp. cremoris (Streptococcus cremoris)).